Consider the following 176-residue polypeptide: MARPDKAAAVAELADQFRSSNAAVLTEYRGLTVAQLKTLRRSLGEDAQYAVVKNTLTKIAANEAGINTLDDLFNGPTAVAFITGDPVVSAKGLRDFAKDNPNLVIKGGVLDGKALSADEIKKLADLESREVLLAKLAGAFKGKQSQAASLFQALPSKFVRTAEALRAKKAEQGGAE.

It belongs to the universal ribosomal protein uL10 family. Part of the ribosomal stalk of the 50S ribosomal subunit. The N-terminus interacts with L11 and the large rRNA to form the base of the stalk. The C-terminus forms an elongated spine to which L12 dimers bind in a sequential fashion forming a multimeric L10(L12)X complex.

Forms part of the ribosomal stalk, playing a central role in the interaction of the ribosome with GTP-bound translation factors. The protein is Large ribosomal subunit protein uL10 of Streptomyces avermitilis (strain ATCC 31267 / DSM 46492 / JCM 5070 / NBRC 14893 / NCIMB 12804 / NRRL 8165 / MA-4680).